A 421-amino-acid chain; its full sequence is Medium-chain specific acyl-CoA dehydrogenase, mitochondrial (421 aa).

Residues 1–25 (MAAALRRGYKVLRSVSHFECRAQHT) constitute a mitochondrion transit peptide. Residue K69 is modified to N6-acetyllysine; alternate. K69 is modified (N6-succinyllysine; alternate). The residue at position 79 (K79) is an N6-acetyllysine. 158–167 (YCVTEPSAGS) contributes to the FAD binding site. Residue S167 participates in octanoyl-CoA binding. Residue K179 is modified to N6-succinyllysine. 191-193 (WIT) serves as a coordination point for FAD. K212 is subject to N6-acetyllysine; alternate. An N6-succinyllysine; alternate modification is found at K212. Octanoyl-CoA is bound at residue S216. N6-acetyllysine; alternate occurs at positions 217, 259, and 271. K217, K259, and K271 each carry N6-succinyllysine; alternate. Octanoyl-CoA is bound by residues D278 and R281. Residue K301 is modified to N6-acetyllysine. FAD contacts are provided by residues 306–308 (RKT) and 316–317 (HQ). Octanoyl-CoA-binding residues include R349 and T351. A Phosphothreonine modification is found at T351. FAD is bound at residue 374-378 (QIFGG). E401 lines the octanoyl-CoA pocket. The active-site Proton acceptor is the E401. Residue 402–405 (GTAQ) coordinates FAD.

The protein belongs to the acyl-CoA dehydrogenase family. In terms of assembly, homotetramer. Interacts with the heterodimeric electron transfer flavoprotein ETF. FAD serves as cofactor. Post-translationally, acetylated. Could occur at proximity of the cofactor-binding sites and reduce the catalytic activity. Could be deacetylated by SIRT3.

The protein localises to the mitochondrion matrix. The enzyme catalyses a medium-chain 2,3-saturated fatty acyl-CoA + oxidized [electron-transfer flavoprotein] + H(+) = a medium-chain (2E)-enoyl-CoA + reduced [electron-transfer flavoprotein]. The catalysed reaction is pentanoyl-CoA + oxidized [electron-transfer flavoprotein] + H(+) = (2E)-pentenoyl-CoA + reduced [electron-transfer flavoprotein]. It catalyses the reaction hexanoyl-CoA + oxidized [electron-transfer flavoprotein] + H(+) = (2E)-hexenoyl-CoA + reduced [electron-transfer flavoprotein]. It carries out the reaction octanoyl-CoA + oxidized [electron-transfer flavoprotein] + H(+) = (2E)-octenoyl-CoA + reduced [electron-transfer flavoprotein]. The enzyme catalyses decanoyl-CoA + oxidized [electron-transfer flavoprotein] + H(+) = (2E)-decenoyl-CoA + reduced [electron-transfer flavoprotein]. The catalysed reaction is dodecanoyl-CoA + oxidized [electron-transfer flavoprotein] + H(+) = (2E)-dodecenoyl-CoA + reduced [electron-transfer flavoprotein]. It catalyses the reaction tetradecanoyl-CoA + oxidized [electron-transfer flavoprotein] + H(+) = (2E)-tetradecenoyl-CoA + reduced [electron-transfer flavoprotein]. It carries out the reaction oxidized [electron-transfer flavoprotein] + hexadecanoyl-CoA + H(+) = (2E)-hexadecenoyl-CoA + reduced [electron-transfer flavoprotein]. The protein operates within lipid metabolism; mitochondrial fatty acid beta-oxidation. Functionally, medium-chain specific acyl-CoA dehydrogenase is one of the acyl-CoA dehydrogenases that catalyze the first step of mitochondrial fatty acid beta-oxidation, an aerobic process breaking down fatty acids into acetyl-CoA and allowing the production of energy from fats. The first step of fatty acid beta-oxidation consists in the removal of one hydrogen from C-2 and C-3 of the straight-chain fatty acyl-CoA thioester, resulting in the formation of trans-2-enoyl-CoA. Electron transfer flavoprotein (ETF) is the electron acceptor that transfers electrons to the main mitochondrial respiratory chain via ETF-ubiquinone oxidoreductase (ETF dehydrogenase). Among the different mitochondrial acyl-CoA dehydrogenases, medium-chain specific acyl-CoA dehydrogenase acts specifically on acyl-CoAs with saturated 6 to 12 carbons long primary chains. The sequence is that of Medium-chain specific acyl-CoA dehydrogenase, mitochondrial from Rattus norvegicus (Rat).